The chain runs to 261 residues: Histone H3-like centromeric protein cpar-1 (261 aa).

Residues 80–150 (TVGSNSTNLV…AGSSSSDRVR (71 aa)) form a disordered region. Residues 113 to 127 (AANSHHQSPINVGNR) show a composition bias toward polar residues. Positions 132–146 (GTNGRNGSRAGSSSS) are enriched in low complexity. The interval 164–261 (YRPGQKALEE…LYRRLCLPNL (98 aa)) is H3-like.

It belongs to the histone H3 family. Forms a nucleosome-like histone octamer containing two molecules each of H2A, H2B, cpar-1 and H4 assembled in one cpar-1-H4 heterotetramer and two H2A-H2B heterodimers. In terms of processing, cleaved at the onset of meiotic anaphase I, likely by separase sep-1.

It localises to the nucleus. The protein localises to the chromosome. Histone H3-like variant which exclusively replaces conventional H3 in the nucleosome core of centromeric chromatin at the inner plate of the kinetochore. Required for recruitment and assembly of kinetochore proteins, mitotic progression and chromosome segregation. May serve as an epigenetic mark that propagates centromere identity through replication and cell division. Not required for chromosome segregation during meiosis. This Caenorhabditis elegans protein is Histone H3-like centromeric protein cpar-1.